We begin with the raw amino-acid sequence, 689 residues long: ATP-dependent zinc metalloprotease FtsH 2 (689 aa).

Over 1-3 the chain is Cytoplasmic; sequence MRK. Residues 4–24 form a helical membrane-spanning segment; it reads FFRGASFYILAFIIILFIVQN. At 25–111 the chain is on the extracellular side; sequence FGRPTQEIDE…SAAPPPTTPW (87 aa). Residues 112–132 traverse the membrane as a helical segment; it reads FIELLPSIFMVLIFIVFWFVF. Residues 133 to 689 are Cytoplasmic-facing; that stretch reads MQQSQGGGNR…QDNEENRKEE (557 aa). 205-212 lines the ATP pocket; that stretch reads GPPGTGKT. Residue His427 participates in Zn(2+) binding. Residue Glu428 is part of the active site. Zn(2+) contacts are provided by His431 and Asp503. Positions 661 to 673 are enriched in basic and acidic residues; the sequence is EELIEVSSDKEEE. Residues 661–689 form a disordered region; sequence EELIEVSSDKEEEKDNQDDQDNEENRKEE.

This sequence in the central section; belongs to the AAA ATPase family. In the C-terminal section; belongs to the peptidase M41 family. As to quaternary structure, homohexamer. Requires Zn(2+) as cofactor.

It localises to the cell membrane. Its function is as follows. Acts as a processive, ATP-dependent zinc metallopeptidase for both cytoplasmic and membrane proteins. Plays a role in the quality control of integral membrane proteins. This is ATP-dependent zinc metalloprotease FtsH 2 from Alkaliphilus metalliredigens (strain QYMF).